Here is a 147-residue protein sequence, read N- to C-terminus: Protein J1 homolog (147 aa).

This sequence belongs to the chordopoxvirinae J1 family. Homodimer. Part of a complex composed of A30, G7, F10 kinase, A15, D2, D3, and J1. Interacts with A45.

The protein resides in the virion. Its subcellular location is the host cytoplasm. Late protein which is a part of a large complex required for early virion morphogenesis. This complex participates in the formation of virosomes and the incorporation of virosomal contents into nascent immature virions. J1 protein is required for DNA packaging during immature virions (IV) formation. The protein is Protein J1 homolog of Sheeppox virus (strain KS-1) (SPPV).